A 414-amino-acid polypeptide reads, in one-letter code: Adenylosuccinate synthetase (414 aa).

GTP is bound by residues 12–18 (GDEGKGK) and 40–42 (GHT). The active-site Proton acceptor is the Asp-13. Mg(2+) is bound by residues Asp-13 and Gly-40. IMP-binding positions include 13–16 (DEGK), 38–41 (NAGH), Thr-124, Arg-138, Gln-216, Thr-231, and Arg-297. The Proton donor role is filled by His-41. Substrate is bound at residue 293–299 (STTGRPR). Residues Arg-299, 325-327 (KLD), and 403-405 (STG) each bind GTP.

It belongs to the adenylosuccinate synthetase family. Homodimer. Mg(2+) serves as cofactor.

It is found in the cytoplasm. It catalyses the reaction IMP + L-aspartate + GTP = N(6)-(1,2-dicarboxyethyl)-AMP + GDP + phosphate + 2 H(+). It functions in the pathway purine metabolism; AMP biosynthesis via de novo pathway; AMP from IMP: step 1/2. In terms of biological role, plays an important role in the de novo pathway of purine nucleotide biosynthesis. Catalyzes the first committed step in the biosynthesis of AMP from IMP. The chain is Adenylosuccinate synthetase from Hydrogenobaculum sp. (strain Y04AAS1).